Consider the following 78-residue polypeptide: uncharacterized protein (78 aa).

Helical transmembrane passes span 7–27 (ICLV…FFQF) and 41–61 (LSRI…GLLF).

The protein localises to the cell membrane. This is an uncharacterized protein from Bacillus subtilis (strain 168).